A 507-amino-acid chain; its full sequence is Probable serine/threonine-protein kinase DDB_G0268078 (507 aa).

The Protein kinase domain occupies 4–286 (YQFIKQVGDG…PLQALQHRYF (283 aa)). ATP contacts are provided by residues 10-18 (VGDGAYGDV) and lysine 33. Aspartate 125 (proton acceptor) is an active-site residue. A compositionally biased stretch (low complexity) spans 323–347 (NYSNNNNNNNLNSNSENLNNVNKNN). 3 disordered regions span residues 323–364 (NYSN…PKNS), 381–404 (NVNNNNNNYNSNTTSGYYNQKLDS), and 428–507 (QQPP…NSKL). Residues 348-361 (QQPHSPQKIQTPKP) are compositionally biased toward polar residues. Over residues 381–399 (NVNNNNNNYNSNTTSGYYN) the composition is skewed to low complexity. Positions 429–450 (QPPPQSQPPQSQPPPQSQPPPI) are enriched in pro residues. Positions 451-470 (LTQQQQQQQQQQQQQQQLPS) are enriched in low complexity. Polar residues-rich tracts occupy residues 471–481 (KTTIYHNTNHL) and 491–507 (RGISPQFYNETTNNSKL).

This sequence belongs to the protein kinase superfamily. CMGC Ser/Thr protein kinase family. CDC2/CDKX subfamily.

It carries out the reaction L-seryl-[protein] + ATP = O-phospho-L-seryl-[protein] + ADP + H(+). It catalyses the reaction L-threonyl-[protein] + ATP = O-phospho-L-threonyl-[protein] + ADP + H(+). This Dictyostelium discoideum (Social amoeba) protein is Probable serine/threonine-protein kinase DDB_G0268078.